The sequence spans 349 residues: Glycerol-3-phosphate dehydrogenase [NAD(+)], cytoplasmic (349 aa).

10–15 provides a ligand contact to NAD(+); it reads GSGNWG. Residue Lys120 participates in substrate binding. Residue Ala153 participates in NAD(+) binding. Ser154 bears the Phosphoserine mark. Lys204 (proton acceptor) is an active-site residue. Arg269 is an NAD(+) binding site. 269-270 lines the substrate pocket; it reads RN. N6-succinyllysine is present on Lys289. 2 residues coordinate NAD(+): Lys296 and Gln298. Phosphotyrosine is present on Tyr326.

The protein belongs to the NAD-dependent glycerol-3-phosphate dehydrogenase family. In terms of assembly, homodimer.

The protein localises to the cytoplasm. The catalysed reaction is sn-glycerol 3-phosphate + NAD(+) = dihydroxyacetone phosphate + NADH + H(+). Its function is as follows. Has glycerol-3-phosphate dehydrogenase activity. This is Glycerol-3-phosphate dehydrogenase [NAD(+)], cytoplasmic (GPD1) from Pongo abelii (Sumatran orangutan).